We begin with the raw amino-acid sequence, 182 residues long: Ribosome-recycling factor (182 aa).

It belongs to the RRF family.

The protein localises to the cytoplasm. Its function is as follows. Responsible for the release of ribosomes from messenger RNA at the termination of protein biosynthesis. May increase the efficiency of translation by recycling ribosomes from one round of translation to another. The protein is Ribosome-recycling factor of Prochlorococcus marinus (strain AS9601).